The sequence spans 128 residues: Glycine cleavage system H protein (128 aa).

The 83-residue stretch at 24–106 (VYSVGITEHA…YTDGWLFSIK (83 aa)) folds into the Lipoyl-binding domain. Lysine 65 carries the N6-lipoyllysine modification.

It belongs to the GcvH family. In terms of assembly, the glycine cleavage system is composed of four proteins: P, T, L and H. It depends on (R)-lipoate as a cofactor.

Its function is as follows. The glycine cleavage system catalyzes the degradation of glycine. The H protein shuttles the methylamine group of glycine from the P protein to the T protein. The polypeptide is Glycine cleavage system H protein (Yersinia enterocolitica serotype O:8 / biotype 1B (strain NCTC 13174 / 8081)).